A 274-amino-acid polypeptide reads, in one-letter code: Transmembrane protein 106B (274 aa).

Residues 1–11 are compositionally biased toward low complexity; it reads MGKSLSHLPLH. Positions 1–20 are disordered; sequence MGKSLSHLPLHSSKEDAYDG. Residue glycine 2 is the site of N-myristoyl glycine attachment. The Cytoplasmic portion of the chain corresponds to 2-96; that stretch reads GKSLSHLPLH…QRLRPRRTKL (95 aa). The residue at position 33 (serine 33) is a Phosphoserine. Residues 97–117 traverse the membrane as a helical segment; the sequence is YVMASVFVCLLLSGLAVFFLF. At 118–274 the chain is on the lumenal side; it reads PRSIDVKYIG…EYLNVLQPQQ (157 aa). N-linked (GlcNAc...) asparagine glycosylation is found at asparagine 145, asparagine 151, asparagine 164, and asparagine 183. A disulfide bridge links cysteine 214 with cysteine 253. N-linked (GlcNAc...) asparagine glycosylation occurs at asparagine 256.

The protein belongs to the TMEM106 family. As to quaternary structure, can form homomers. Interacts (via N-terminus) with MAP6 (via C-terminus). Interacts (via C-terminus) with the vacuolar-type ATPase subunit ATP6AP1. Interacts (via N-terminus) with AP2M1 and CLTC. Interacts with TMEM106C. In terms of assembly, (Microbial infection) Interacts with SARS coronavirus-2/SARS-CoV-2 spike protein (via RBD domain). In terms of tissue distribution, expressed in the brain, including in the frontal cortex (at protein level). Expressed in lung epithelial cells.

It is found in the late endosome membrane. Its subcellular location is the lysosome membrane. It localises to the cell membrane. In terms of biological role, in neurons, involved in the transport of late endosomes/lysosomes. May be involved in dendrite morphogenesis and maintenance by regulating lysosomal trafficking. May act as a molecular brake for retrograde transport of late endosomes/lysosomes, possibly via its interaction with MAP6. In motoneurons, may mediate the axonal transport of lysosomes and axonal sorting at the initial segment. It remains unclear whether TMEM106B affects the transport of moving lysosomes in the anterograde or retrograde direction in neurites and whether it is important in the sorting of lysosomes in axons or in dendrites. In neurons, may also play a role in the regulation of lysosomal size and responsiveness to stress. Required for proper lysosomal acidification. Functionally, (Microbial infection) Plays a role in human coronavirus SARS-CoV-2 infection, but not in common cold coronaviruses HCoV-229E and HCoV-OC43 infections. Involved in ACE2-independent SARS-CoV-2 cell entry. Required for post-endocytic stage of virus entry, facilitates spike-mediated membrane fusion. Virus attachment and endocytosis can also be mediated by other cell surface receptors. In Homo sapiens (Human), this protein is Transmembrane protein 106B.